The primary structure comprises 410 residues: MITHNFNTLDLLTSPVWIVSPFEEQLIYANSAARLLMQDLTFSQLRTGPYSVSSQKELPKYLSDLQNQHDIIEILTVQRKEEETALSCRLVLRELTETEPVIIFEGIEAPATLGLKASRSANYQRKKQGFYARFFLTNSAPMLLIDPSRDGQIVDANLAALNFYGYNHETMCQKHTWEINMLGRRVMPIMHEISHLPGGHKPLNFIHKLADGSTRHVQTYAGPIEIYGDKLMLCIVHDITEQKRLEEQLEHAAHHDAMTGLLNRRQFYHITEPGQMQHLAIAQDYSLLLIDTDRFKHINDLYGHSKGDEVLCALARTLESCARKGDLVFRWGGEEFVLLLPRTPLDTALSLAETIRVSVAKVSISGLPRFTVSIGVAHHEGNESIDELFKRVDDALYRAKNDGRNRVLAA.

PAS domains follow at residues 3–70 (THNF…NQHD) and 129–198 (GFYA…HLPG). The 53-residue stretch at 199-251 (GHKPLNFIHKLADGSTRHVQTYAGPIEIYGDKLMLCIVHDITEQKRLEEQLEH) folds into the PAC domain. The 128-residue stretch at 283–410 (QDYSLLLIDT…NDGRNRVLAA (128 aa)) folds into the GGDEF domain. Mg(2+) is bound at residue D291. 3 residues coordinate substrate: N299, H304, and D308. A Mg(2+)-binding site is contributed by E334. The active-site Proton acceptor is E334.

Mg(2+) is required as a cofactor.

The catalysed reaction is 2 GTP = 3',3'-c-di-GMP + 2 diphosphate. Its pathway is purine metabolism; 3',5'-cyclic di-GMP biosynthesis. Part of a signaling cascade that regulates curli biosynthesis. The cascade is composed of two cyclic-di-GMP (c-di-GMP) control modules, in which c-di-GMP controlled by the DgcE/PdeH pair (module I) regulates the activity of the DgcM/PdeR pair (module II), which in turn regulates activity of the transcription factor MlrA and expression of the master biofilm regulator csgD. The chain is Diguanylate cyclase DgcM from Escherichia coli O157:H7.